The primary structure comprises 57 residues: Large ribosomal subunit protein bL32c (57 aa).

Belongs to the bacterial ribosomal protein bL32 family.

It localises to the plastid. Its subcellular location is the chloroplast. This Liriodendron tulipifera (Tuliptree) protein is Large ribosomal subunit protein bL32c.